Consider the following 643-residue polypeptide: NAD-dependent malic enzyme, mitochondrial (643 aa).

The transit peptide at 1 to 38 (PRVRSFIAHQSGITSVIRRSPDIAHRMVRSLSVSSQRN) directs the protein to the mitochondrion. Gln-116, Arg-119, and Arg-143 together coordinate fumarate. Tyr-164 (proton donor) is an active-site residue. Arg-219 is a (S)-malate binding site. Residue Arg-219 participates in NAD(+) binding. The Proton acceptor role is filled by Lys-237. 2 residues coordinate a divalent metal cation: Glu-309 and Asp-310. Residues Asn-313, Asp-333, Ala-366, Ala-369, and Asn-472 each contribute to the NAD(+) site. Residue Asp-333 coordinates a divalent metal cation. Residues Asn-472 and Asn-516 each coordinate (S)-malate.

The protein belongs to the malic enzymes family. In terms of assembly, homotetramer. Mg(2+) serves as cofactor. Mn(2+) is required as a cofactor.

Its subcellular location is the mitochondrion matrix. It catalyses the reaction (S)-malate + NAD(+) = pyruvate + CO2 + NADH. It carries out the reaction oxaloacetate + H(+) = pyruvate + CO2. With respect to regulation, subject to allosteric activation by fumarate. NAD-dependent mitochondrial malic enzyme that catalyzes the oxidative decarboxylation of malate to pyruvate. This chain is NAD-dependent malic enzyme, mitochondrial, found in Ascaris suum (Pig roundworm).